Reading from the N-terminus, the 246-residue chain is Neurotrophic factor BDNF precursor form (246 aa).

An N-terminal signal peptide occupies residues 1-18 (MTILFLTMVISYFSCMKA). Positions 19–127 (APMKEASVRG…AANMSMRVRR (109 aa)) are excised as a propeptide. The N-linked (GlcNAc...) asparagine glycan is linked to Asn120. Disulfide bonds link Cys140-Cys207, Cys185-Cys236, and Cys195-Cys238.

Belongs to the NGF-beta family.

The protein resides in the secreted. Its function is as follows. Important signaling molecule that activates signaling cascades downstream of NTRK2. During development, promotes the survival and differentiation of selected neuronal populations of the peripheral and central nervous systems. Participates in axonal growth, pathfinding and in the modulation of dendritic growth and morphology. Major regulator of synaptic transmission and plasticity at adult synapses in many regions of the CNS. The versatility of BDNF is emphasized by its contribution to a range of adaptive neuronal responses including long-term potentiation (LTP), long-term depression (LTD), certain forms of short-term synaptic plasticity, as well as homeostatic regulation of intrinsic neuronal excitability. The sequence is that of Neurotrophic factor BDNF precursor form (BDNF) from Gallus gallus (Chicken).